We begin with the raw amino-acid sequence, 636 residues long: TNFAIP3-interacting protein 1 (636 aa).

Residues Glu20–Leu73 adopt a coiled-coil conformation. The span at Gln61–Glu71 shows a compositional bias: basic and acidic residues. 2 disordered regions span residues Gln61–Pro151 and Met252–Ala283. Ser77 is modified (phosphoserine). Residues Ser94 to Gln412 are interaction with Nef. Polar residues predominate over residues Glu131–Ala142. The stretch at Ser196–Glu258 forms a coiled coil. A Phosphoserine modification is found at Ser284. A coiled-coil region spans residues Val294 to Tyr535. The segment at Asp351–Leu367 is interaction with Shigella flexneri ipah9.8. The residue at position 403 (Ser403) is a Phosphoserine. The tract at residues Thr431–Ser588 is required for inhibitory activity of TNF-induced NF-kappa-B activation. At Thr438 the chain carries Phosphothreonine. The residue at position 442 (Ser442) is a Phosphoserine. Positions Lys452 to Ala510 are ubiquitin-binding domain (UBD). The Nuclear localization signal signature appears at Gln524–Ala530. A Phosphotyrosine modification is found at Tyr552. Arg571 carries the asymmetric dimethylarginine modification. Arg599 is modified (asymmetric dimethylarginine; alternate). Arg599 carries the post-translational modification Omega-N-methylarginine; alternate. The tract at residues Gly603–Gln636 is disordered. Residues Thr623–Gln636 show a composition bias toward basic and acidic residues. Residue Ser627 is modified to Phosphoserine.

Interacts with TNFAIP3 and IKBKG (polyubiquitinated); facilitates TNFAIP3-mediated de-ubiquitination of NEMO/IKBKG. Interacts with polyubiquitin. Interacts with MAPK1, SELPLG and PIK3CD. Interacts with IRAK1 (polyubiquitinated). Interacts with MYD88; the interaction is indicative for participation in an activated TLR-signaling complex. Interacts with HIV-1 matrix protein. Interacts with TAX1BP1. In terms of assembly, (Microbial infection) Interacts with Shigella flexneri ipah9.8; the interaction promotes polyubiquitination of IKBKG. Phosphorylation at Tyr-552 by SRC-family kinases recruits phosphoinositide-3-kinase (PI3K) PIK3CD:p85 heterodimer which results in integrin activation and leukocyte adhesion to activated endothelium during inflammation. In terms of tissue distribution, ubiquitous. Strongly expressed in peripheral blood lymphocytes, spleen and skeletal muscle, and is weakly expressed in the brain. In peripheral blood mononucleocytes, isoform 4 is mainly expressed and isoform 1 and isoform 7 are almost not expressed. Expression of isoform 1 and isoform 7 increases in leukemic cells.

It is found in the cytoplasm. The protein resides in the nucleus. Functionally, inhibits NF-kappa-B activation and TNF-induced NF-kappa-B-dependent gene expression by regulating TAX1BP1 and A20/TNFAIP3-mediated deubiquitination of IKBKG; proposed to link A20/TNFAIP3 to ubiquitinated IKBKG. Involved in regulation of EGF-induced ERK1/ERK2 signaling pathway; blocks MAPK3/MAPK1 nuclear translocation and MAPK1-dependent transcription. Increases cell surface CD4(T4) antigen expression. Involved in the anti-inflammatory response of macrophages and positively regulates TLR-induced activation of CEBPB. Involved in the prevention of autoimmunity; this function implicates binding to polyubiquitin. Involved in leukocyte integrin activation during inflammation; this function is mediated by association with SELPLG and dependent on phosphorylation by SRC-family kinases. Interacts with HIV-1 matrix protein and is packaged into virions and overexpression can inhibit viral replication. May regulate matrix nuclear localization, both nuclear import of PIC (Preintegration complex) and export of GAG polyprotein and viral genomic RNA during virion production. In case of infection, promotes association of IKBKG with Shigella flexneri E3 ubiquitin-protein ligase ipah9.8 p which in turn promotes polyubiquitination of IKBKG leading to its proteasome-dependent degradation and thus is perturbing NF-kappa-B activation during bacterial infection. This chain is TNFAIP3-interacting protein 1 (TNIP1), found in Homo sapiens (Human).